Here is a 447-residue protein sequence, read N- to C-terminus: Phosphoglucosamine mutase (447 aa).

Ser104 serves as the catalytic Phosphoserine intermediate. Mg(2+) is bound by residues Ser104, Asp243, Asp245, and Asp247. At Ser104 the chain carries Phosphoserine.

The protein belongs to the phosphohexose mutase family. Mg(2+) is required as a cofactor. Activated by phosphorylation.

It catalyses the reaction alpha-D-glucosamine 1-phosphate = D-glucosamine 6-phosphate. In terms of biological role, catalyzes the conversion of glucosamine-6-phosphate to glucosamine-1-phosphate. The protein is Phosphoglucosamine mutase of Corynebacterium diphtheriae (strain ATCC 700971 / NCTC 13129 / Biotype gravis).